We begin with the raw amino-acid sequence, 218 residues long: MSKISLDALNVRNALIEKGIETPMIDPTQAKNERRESIAKHMHEVMKLIGLDLRDDSLEETPNRLAKMFIDEIFSGMDYANFPKMTKIKNQMKVSEMVQVNDITLTSTCEHHFVTIDGKVCVAYYPKDWVIGLSKINRIVSFFAQRPQVQERLTEQLLTAFQTILETDDVAVYVKATHFCVKARGIRDTNSYTVTSAYGGVFLEDRDTRKEFLATVQK.

The Zn(2+) site is built by Cys109, His112, and Cys180.

Belongs to the GTP cyclohydrolase I family. As to quaternary structure, toroid-shaped homodecamer, composed of two pentamers of five dimers.

The catalysed reaction is GTP + H2O = 7,8-dihydroneopterin 3'-triphosphate + formate + H(+). It participates in cofactor biosynthesis; 7,8-dihydroneopterin triphosphate biosynthesis; 7,8-dihydroneopterin triphosphate from GTP: step 1/1. The chain is GTP cyclohydrolase 1 (folE) from Haemophilus influenzae (strain ATCC 51907 / DSM 11121 / KW20 / Rd).